We begin with the raw amino-acid sequence, 2200 residues long: Non-reducing polyketide synthase tpeB (2200 aa).

A Starter acyltransferase (SAT) domain is found at 16–255; the sequence is FFGDQTVDTL…MDLPLGTPAH (240 aa). A Ketosynthase family 3 (KS3) domain is found at 382–815; that stretch reads SNMIAIVGQS…GGNNCVLLEE (434 aa). Active-site for beta-ketoacyl synthase activity residues include Cys554, His690, and His729. In terms of domain architecture, Malonyl-CoA:ACP transacylase (MAT) spans 914–1202; the sequence is VFAFTGQGSQ…VLNSFIKATL (289 aa). The interval 1296-1621 is product template (PT) domain; the sequence is TASLQRVREE…TKRILTTILG (326 aa). The tract at residues 1300–1433 is N-terminal hotdog fold; the sequence is QRVREERIQG…CKIRFESKAD (134 aa). Residues 1300-1617 enclose the PKS/mFAS DH domain; that stretch reads QRVREERIQG…FQRLTKRILT (318 aa). His1332 (proton acceptor; for dehydratase activity) is an active-site residue. The interval 1462-1617 is C-terminal hotdog fold; it reads NGHKLPKPVV…FQRLTKRILT (156 aa). The Proton donor; for dehydratase activity role is filled by Asp1522. The interval 1625-1652 is disordered; it reads DHHNSNEVRNGNATTTHTNPPAHATTQS. Positions 1636 to 1650 are enriched in low complexity; sequence NATTTHTNPPAHATT. Carrier domains are found at residues 1671-1748 and 1791-1865; these read TVGE…AELP and ANYA…GPNT. Ser1708 and Ser1825 each carry O-(pantetheine 4'-phosphoryl)serine. A thioesterase (TE) domain region spans residues 1931-2173; it reads MFFLPDGTGY…TVPCDHLSIM (243 aa).

It depends on pantetheine 4'-phosphate as a cofactor.

It participates in secondary metabolite biosynthesis. In terms of biological role, non-reducing polyketide synthase; part of the gene cluster that mediates the biosynthesis of polyesters containing 2,4-dihydroxy-6-(2-hydroxypropyl)benzoate and 3-hydroxybutyrate moieties, such as talapolyester G, 15G256beta and 15G256beta-2; as well as to oxidized derivatives such as 15G256alpha. The biosynthesis of the polyesters probably starts with the formation of the diketide 3-hydroxybutyryl-S-ACP catalyzed by the partially reducing polyketide synthase tpeA. The acceptance of 3-hydroxybutyryl by the non-reducing polyketide synthase tpeB would initiate further elongation and cyclization, catalyzed by KS and PT, respectively, to form 2,4-dihydroxy-6-(2-hydroxyn-propyl)benzoyl-S-ACP intermediate. The TE domain could catalyze lactonization at this step to yield 6-hydroxymellein as a derailment product. The polyesterification process maybe occurs when additional molecules of 3-hydroxybutyryl are transferred to tpeB. Following the first esterification step, an intramolecular cyclization catalyzed by the TE domain of tpeB would give talarodioxadione 1, whereas the ethyl esterification of talapolyester G perhaps happens spontaneously. Further oxidation by the cytochrome P450 monooxygenase tpeC then leads to the formation of oxidized derivatives. The sequence is that of Non-reducing polyketide synthase tpeB from Talaromyces stipitatus (strain ATCC 10500 / CBS 375.48 / QM 6759 / NRRL 1006) (Penicillium stipitatum).